The sequence spans 404 residues: Cysteine desulfurase IscS (404 aa).

Pyridoxal 5'-phosphate is bound by residues 75-76 (AT), N155, Q183, and 203-205 (SGH). K206 bears the N6-(pyridoxal phosphate)lysine mark. T243 serves as a coordination point for pyridoxal 5'-phosphate. The active-site Cysteine persulfide intermediate is the C328. C328 contributes to the [2Fe-2S] cluster binding site.

It belongs to the class-V pyridoxal-phosphate-dependent aminotransferase family. NifS/IscS subfamily. In terms of assembly, homodimer. Forms a heterotetramer with IscU, interacts with other sulfur acceptors. Requires pyridoxal 5'-phosphate as cofactor.

The protein localises to the cytoplasm. It catalyses the reaction (sulfur carrier)-H + L-cysteine = (sulfur carrier)-SH + L-alanine. Its pathway is cofactor biosynthesis; iron-sulfur cluster biosynthesis. Master enzyme that delivers sulfur to a number of partners involved in Fe-S cluster assembly, tRNA modification or cofactor biosynthesis. Catalyzes the removal of elemental sulfur atoms from cysteine to produce alanine. Functions as a sulfur delivery protein for Fe-S cluster synthesis onto IscU, an Fe-S scaffold assembly protein, as well as other S acceptor proteins. The chain is Cysteine desulfurase IscS from Actinobacillus succinogenes (strain ATCC 55618 / DSM 22257 / CCUG 43843 / 130Z).